The following is a 200-amino-acid chain: 3-isopropylmalate dehydratase small subunit (200 aa).

Belongs to the LeuD family. LeuD type 1 subfamily. In terms of assembly, heterodimer of LeuC and LeuD.

It carries out the reaction (2R,3S)-3-isopropylmalate = (2S)-2-isopropylmalate. It participates in amino-acid biosynthesis; L-leucine biosynthesis; L-leucine from 3-methyl-2-oxobutanoate: step 2/4. Its function is as follows. Catalyzes the isomerization between 2-isopropylmalate and 3-isopropylmalate, via the formation of 2-isopropylmaleate. This is 3-isopropylmalate dehydratase small subunit from Vibrio campbellii (strain ATCC BAA-1116).